The sequence spans 244 residues: 5-oxoprolinase subunit A (244 aa).

The protein belongs to the LamB/PxpA family. In terms of assembly, forms a complex composed of PxpA, PxpB and PxpC.

It catalyses the reaction 5-oxo-L-proline + ATP + 2 H2O = L-glutamate + ADP + phosphate + H(+). Functionally, catalyzes the cleavage of 5-oxoproline to form L-glutamate coupled to the hydrolysis of ATP to ADP and inorganic phosphate. In Salmonella heidelberg (strain SL476), this protein is 5-oxoprolinase subunit A.